A 722-amino-acid chain; its full sequence is Pentatricopeptide repeat-containing protein At4g14820 (722 aa).

PPR repeat units follow at residues 75-109, 110-140, 145-175, 176-210, 211-245, 246-276, 277-307, 308-342, 343-377, 378-408, 409-443, 444-479, and 480-514; these read ESIVFNPFLRDLSRSSEPRATILFYQRIRHVGGRL, DQFSFLPILKAVSKVSALFEGMELHGVAFKI, DPFVETGFMDMYASCGRINYARNVFDEMSHR, DVVTWNTMIERYCRFGLVDEAFKLFEEMKDSNVMP, DEMILCNIVSACGRTGNMRYNRAIYEFLIENDVRM, DTHLLTALVTMYAGAGCMDMAREFFRKMSVR, NLFVSTAMVSGYSKCGRLDDAQVIFDQTEKK, DLVCWTTMISAYVESDYPQEALRVFEEMCCSGIKP, DVVSMFSVISACANLGILDKAKWVHSCIHVNGLES, ELSINNALINMYAKCGGLDATRDVFEKMPRR, NVVSWSSMINALSMHGEASDALSLFARMKQENVEP, NEVTFVGVLYGCSHSGLVEEGKKIFASMTDEYNITP, and KLEHYGCMVDLFGRANLLREALEVIESMPVASNVV. The interval 515-590 is type E motif; it reads IWGSLMSACR…EKGLSRIDQN (76 aa). The type E(+) motif stretch occupies residues 591–621; that stretch reads GKSHEFLIGDKRHKQSNEIYAKLDEVVSKLK. Residues 622–722 are type DYW motif; that stretch reads LAGYVPDCGS…NGLCSCRDYW (101 aa).

This sequence belongs to the PPR family. PCMP-H subfamily.

In Arabidopsis thaliana (Mouse-ear cress), this protein is Pentatricopeptide repeat-containing protein At4g14820 (PCMP-H3).